Reading from the N-terminus, the 196-residue chain is TGEKPFMCTKCGKCLSTKQKLNLHHMTHTGEKPFTCTECGKGFSRNDYLKIHQTIHTGEKPFTCIECGKGFSINRTLKLHYMTHTGEKPFTCTECSKGFSTKRDLEIHQTMHTGEKPLTCTECSKGFSTKHKLSIHQRVHTGEKPFTCTECNKGFSRNDHLQIHQTVHTGEKPFTCTECSKCFSRKELLKIHQIVH.

7 C2H2-type zinc fingers span residues 6 to 28 (FMCTKCGKCLSTKQKLNLHHMTH), 34 to 56 (FTCTECGKGFSRNDYLKIHQTIH), 62 to 84 (FTCIECGKGFSINRTLKLHYMTH), 90 to 112 (FTCTECSKGFSTKRDLEIHQTMH), 118 to 140 (LTCTECSKGFSTKHKLSIHQRVH), 146 to 168 (FTCTECNKGFSRNDHLQIHQTVH), and 174 to 196 (FTCTECSKCFSRKELLKIHQIVH).

Belongs to the krueppel C2H2-type zinc-finger protein family.

It localises to the nucleus. Its function is as follows. May be involved in transcriptional regulation. This Xenopus laevis (African clawed frog) protein is Gastrula zinc finger protein xLCGF3.1.